A 340-amino-acid polypeptide reads, in one-letter code: Uroporphyrinogen decarboxylase (340 aa).

Residues 21–25, D71, Y148, S203, and H316 each bind substrate; that span reads RQAGR.

This sequence belongs to the uroporphyrinogen decarboxylase family. As to quaternary structure, homodimer.

It localises to the cytoplasm. It catalyses the reaction uroporphyrinogen III + 4 H(+) = coproporphyrinogen III + 4 CO2. The protein operates within porphyrin-containing compound metabolism; protoporphyrin-IX biosynthesis; coproporphyrinogen-III from 5-aminolevulinate: step 4/4. Functionally, catalyzes the decarboxylation of four acetate groups of uroporphyrinogen-III to yield coproporphyrinogen-III. The chain is Uroporphyrinogen decarboxylase from Campylobacter jejuni subsp. jejuni serotype O:23/36 (strain 81-176).